Here is a 780-residue protein sequence, read N- to C-terminus: Tyrosine-protein phosphatase non-receptor type 12 (780 aa).

An N-acetylmethionine modification is found at methionine 1. Serine 19 bears the Phosphoserine mark. The region spanning 28–293 (FARDFMRLRR…ELVHRAIAQL (266 aa)) is the Tyrosine-protein phosphatase domain. Substrate is bound by residues arginine 36, 63–67 (RYKDI), aspartate 199, 231–237 (CSAGCGR), and glutamine 278. The active-site Phosphocysteine intermediate is cysteine 231. Residues serine 332, serine 435, serine 449, and serine 468 each carry the phosphoserine modification. The segment at 345–438 (VEGDAKEEIL…KLERNLSFEI (94 aa)) is interaction with TGFB1I1. Residues 502 to 519 (QSNKVSVTPPEESQNSDT) show a composition bias toward polar residues. Disordered regions lie at residues 502–639 (QSNK…STES), 657–725 (GTTH…EKCD), and 744–780 (SDKR…SEWT). Phosphothreonine occurs at positions 509 and 519. Positions 521–533 (PRPDRLPLDEKGH) are enriched in basic and acidic residues. Polar residues-rich tracts occupy residues 552–577 (EGNS…TQVE) and 587–601 (TSPL…TNPL). At serine 567 the chain carries Phosphoserine. Threonine 569 carries the phosphothreonine modification. Serine 571 and serine 596 each carry phosphoserine. Threonine 598 carries the post-translational modification Phosphothreonine. The span at 602–613 (HSDDSDSDERNS) shows a compositional bias: basic and acidic residues. Phosphoserine occurs at positions 603, 606, 608, and 613. The segment covering 622–639 (TNISTASATVSAATSTES) has biased composition (low complexity). A phosphoserine mark is found at serine 673 and serine 689. Positions 690–703 (EHNTPVRSEWSELQ) are enriched in polar residues. Threonine 693 is subject to Phosphothreonine. 2 stretches are compositionally biased toward basic and acidic residues: residues 704–725 (SQER…EKCD) and 771–780 (GPRDPPSEWT).

Belongs to the protein-tyrosine phosphatase family. Non-receptor class 4 subfamily. As to quaternary structure, interacts with TGFB1I1. Interacts with PSTPIP1. Interacts with PTK2B/PYK2. Interacts with LPXN. Interacts with SORBS2; this interaction greatly enhances WASF1 dephosphorylation and might mediate partial translocation to focal adhesion sites. Phosphorylated by STK24/MST3 and this results in inhibition of its activity.

The protein resides in the cytoplasm. It localises to the cell junction. Its subcellular location is the focal adhesion. The protein localises to the cell projection. It is found in the podosome. It catalyses the reaction O-phospho-L-tyrosyl-[protein] + H2O = L-tyrosyl-[protein] + phosphate. Functionally, dephosphorylates a range of proteins, and thereby regulates cellular signaling cascades. Dephosphorylates cellular tyrosine kinases, such as ERBB2 and PTK2B/PYK2, and thereby regulates signaling via ERBB2 and PTK2B/PYK2. Selectively dephosphorylates ERBB2 phosphorylated at 'Tyr-1112', 'Tyr-1196', and/or 'Tyr-1248'. The sequence is that of Tyrosine-protein phosphatase non-receptor type 12 (PTPN12) from Homo sapiens (Human).